The following is a 459-amino-acid chain: uncharacterized protein (459 aa).

The TRAM domain maps to 5–63 (PVEEGQKFPLTIRRMGINGEGIGYFKKAVVFVPGAITGEEVVVEAVKVRDRFTEAKLNK). [4Fe-4S] cluster-binding residues include cysteine 76, cysteine 82, cysteine 85, and cysteine 166. Residues glutamine 290, tyrosine 319, aspartate 340, and aspartate 388 each contribute to the S-adenosyl-L-methionine site. The Nucleophile role is filled by cysteine 415.

This sequence belongs to the class I-like SAM-binding methyltransferase superfamily. RNA M5U methyltransferase family.

This is an uncharacterized protein from Listeria monocytogenes serovar 1/2a (strain ATCC BAA-679 / EGD-e).